The primary structure comprises 298 residues: Sulfofructose kinase (298 aa).

Residues Asp-13, Lys-27, Gly-39, Ser-95, and Arg-138 each coordinate 6-deoxy-6-sulfo-D-fructose. Residues Thr-212, Gly-214, Gly-217, and Gly-243 each coordinate ATP. Asp-244 contributes to the 6-deoxy-6-sulfo-D-fructose binding site.

The protein belongs to the carbohydrate kinase PfkB family. As to quaternary structure, homodimer.

The enzyme catalyses 6-deoxy-6-sulfo-D-fructose + ATP = 6-deoxy-6-sulfo-D-fructose 1-phosphate + ADP + H(+). Its activity is regulated as follows. Strongly inhibited by ADP. Activated by sulfoquinovose (SQ), sulfolactaldehyde (SLA) and dihydroxyacetone phosphate (DHAP) (through effects on KM) and by fructose 6-phosphate (F6P), fructose bisphosphate (FBP), phosphoenolpyruvate (PEP) and citrate (through effects on kcat/KM). Functionally, phosphorylates 6-deoxy-6-sulfo-D-fructose (SF) to 6-deoxy-6-sulfo-D-fructose 1-phosphate (SFP). Cannot phosphorylate fructose 6-phosphate. In Escherichia coli (strain K12), this protein is Sulfofructose kinase (yihV).